The following is a 303-amino-acid chain: 5'-3' exonuclease (303 aa).

One can recognise a 5'-3' exonuclease domain in the interval 179–262 (ISPAQWVDVK…LATITTEIEA (84 aa)).

5'-3' exonuclease acting preferentially on double-stranded DNA. In Halalkalibacterium halodurans (strain ATCC BAA-125 / DSM 18197 / FERM 7344 / JCM 9153 / C-125) (Bacillus halodurans), this protein is 5'-3' exonuclease.